The chain runs to 475 residues: Ribulose bisphosphate carboxylase large chain (475 aa).

Positions 1–2 are excised as a propeptide; the sequence is MS. Position 3 is an N-acetylproline (proline 3). Lysine 14 carries the post-translational modification N6,N6,N6-trimethyllysine. Positions 123 and 173 each coordinate substrate. The active-site Proton acceptor is lysine 175. Lysine 177 contacts substrate. Lysine 201, aspartate 203, and glutamate 204 together coordinate Mg(2+). Residue lysine 201 is modified to N6-carboxylysine. The active-site Proton acceptor is the histidine 294. Positions 295, 327, and 379 each coordinate substrate.

Belongs to the RuBisCO large chain family. Type I subfamily. Heterohexadecamer of 8 large chains and 8 small chains; disulfide-linked. The disulfide link is formed within the large subunit homodimers. It depends on Mg(2+) as a cofactor. In terms of processing, the disulfide bond which can form in the large chain dimeric partners within the hexadecamer appears to be associated with oxidative stress and protein turnover.

The protein localises to the plastid. It localises to the chloroplast. The catalysed reaction is 2 (2R)-3-phosphoglycerate + 2 H(+) = D-ribulose 1,5-bisphosphate + CO2 + H2O. It carries out the reaction D-ribulose 1,5-bisphosphate + O2 = 2-phosphoglycolate + (2R)-3-phosphoglycerate + 2 H(+). Functionally, ruBisCO catalyzes two reactions: the carboxylation of D-ribulose 1,5-bisphosphate, the primary event in carbon dioxide fixation, as well as the oxidative fragmentation of the pentose substrate in the photorespiration process. Both reactions occur simultaneously and in competition at the same active site. The chain is Ribulose bisphosphate carboxylase large chain from Amborella trichopoda.